The chain runs to 372 residues: Adaptive-response sensory kinase SasA (372 aa).

The Histidine kinase domain maps to 147–360 (MVAHELRTPL…CFHFTVPVWQ (214 aa)). H150 carries the phosphohistidine; by autocatalysis modification.

Homooligomerizes. Interacts with KaiC. Participates in the KaiBC complex, whose core is composed of a KaiC homohexamer and 6 KaiB.

It catalyses the reaction ATP + protein L-histidine = ADP + protein N-phospho-L-histidine.. Member of the two-component regulatory system SasA/RpaA involved in genome-wide circadian gene expression. One of several clock output pathways. Participates in the Kai clock protein complex, the main circadian regulator in cyanobacteria, via its interaction with KaiC. KaiC enhances the autophosphorylation activity of SasA, which then transfers its phosphate group to RpaA to activate it. In addition to its output function, recruits fold-shifted KaiB (KaiB(fs)) to KaiC to cooperatively form the KaiB(6):KaiC(6) complex (independent of SasA kinase activity). Required for robustness of the circadian rhythm of gene expression and is involved in clock output, also required for adaptation to light/dark cycles. In Prochlorococcus marinus (strain MIT 9301), this protein is Adaptive-response sensory kinase SasA.